Consider the following 424-residue polypeptide: Histidine--tRNA ligase (424 aa).

The protein belongs to the class-II aminoacyl-tRNA synthetase family. Homodimer.

The protein resides in the cytoplasm. It carries out the reaction tRNA(His) + L-histidine + ATP = L-histidyl-tRNA(His) + AMP + diphosphate + H(+). In Escherichia coli O139:H28 (strain E24377A / ETEC), this protein is Histidine--tRNA ligase.